Consider the following 143-residue polypeptide: MFMGEFDHQLDTKGRMIIPSKFRYDLNERFIITRGLDKCLFGYTLEEWQQIEEKMKTLPMTKKDARKFMRMFFSGAVEVELDKQGRINIPQNLRKYANLSKECTVIGVSNRIEIWDRETWNDFYDESEESFEDIAEDLIDFDF.

SpoVT-AbrB domains lie at 5-47 (EFDH…TLEE) and 76-119 (AVEV…DRET).

It belongs to the MraZ family. In terms of assembly, forms oligomers.

The protein localises to the cytoplasm. Its subcellular location is the nucleoid. This chain is Transcriptional regulator MraZ, found in Staphylococcus epidermidis (strain ATCC 35984 / DSM 28319 / BCRC 17069 / CCUG 31568 / BM 3577 / RP62A).